Consider the following 418-residue polypeptide: 3-isopropylmalate dehydratase large subunit 1 (418 aa).

[4Fe-4S] cluster-binding residues include cysteine 298, cysteine 358, and cysteine 361.

The protein belongs to the aconitase/IPM isomerase family. LeuC type 2 subfamily. As to quaternary structure, heterodimer of LeuC and LeuD. [4Fe-4S] cluster serves as cofactor.

The catalysed reaction is (2R,3S)-3-isopropylmalate = (2S)-2-isopropylmalate. Its pathway is amino-acid biosynthesis; L-leucine biosynthesis; L-leucine from 3-methyl-2-oxobutanoate: step 2/4. Functionally, catalyzes the isomerization between 2-isopropylmalate and 3-isopropylmalate, via the formation of 2-isopropylmaleate. The protein is 3-isopropylmalate dehydratase large subunit 1 of Methanopyrus kandleri (strain AV19 / DSM 6324 / JCM 9639 / NBRC 100938).